The chain runs to 451 residues: 2-succinylbenzoate--CoA ligase (451 aa).

The protein belongs to the ATP-dependent AMP-binding enzyme family. MenE subfamily.

The enzyme catalyses 2-succinylbenzoate + ATP + CoA = 2-succinylbenzoyl-CoA + AMP + diphosphate. It participates in quinol/quinone metabolism; 1,4-dihydroxy-2-naphthoate biosynthesis; 1,4-dihydroxy-2-naphthoate from chorismate: step 5/7. It functions in the pathway quinol/quinone metabolism; menaquinone biosynthesis. Its function is as follows. Converts 2-succinylbenzoate (OSB) to 2-succinylbenzoyl-CoA (OSB-CoA). This Lactococcus lactis subsp. lactis (strain IL1403) (Streptococcus lactis) protein is 2-succinylbenzoate--CoA ligase.